Consider the following 347-residue polypeptide: Haptoglobin (347 aa).

The N-terminal stretch at 1-18 (MRALGAVITLLLWGQLFA) is a signal peptide. The Sushi domain maps to 31-88 (DSCPKPPEIANGYVEHLVRYQCKNYYRLRTEGDGVYALNSEKQWVNKAVGEQLPECEA). Cystine bridges form between cysteine 52–cysteine 86 and cysteine 90–cysteine 207. One can recognise a Peptidase S1 domain in the interval 103–345 (IIGGSLDAKG…ILDWIQKTIA (243 aa)). N-linked (GlcNAc...) asparagine glycans are attached at residues asparagine 148, asparagine 152, asparagine 182, asparagine 230, and asparagine 256. 2 disulfides stabilise this stretch: cysteine 250–cysteine 281 and cysteine 292–cysteine 322. Residues 259 to 264 (VPENKI) form an interaction with CD163 region.

This sequence belongs to the peptidase S1 family. In terms of assembly, tetramer of two alpha and two beta chains; disulfide-linked. The hemoglobin/haptoglobin complex is composed of a haptoglobin dimer bound to two hemoglobin alpha-beta dimers. Interacts with CD163. Interacts with ERGIC3. Expressed by the liver and secreted in plasma.

The protein resides in the secreted. As a result of hemolysis, hemoglobin is found to accumulate in the kidney and is secreted in the urine. Haptoglobin captures, and combines with free plasma hemoglobin to allow hepatic recycling of heme iron and to prevent kidney damage. Haptoglobin also acts as an antioxidant, has antibacterial activity and plays a role in modulating many aspects of the acute phase response. Hemoglobin/haptoglobin complexes are rapidly cleared by the macrophage CD163 scavenger receptor expressed on the surface of liver Kupfer cells through an endocytic lysosomal degradation pathway. The polypeptide is Haptoglobin (HP) (Oryctolagus cuniculus (Rabbit)).